The chain runs to 64 residues: Peptide Ctri9677 (64 aa).

Residues 1–22 (MKNNTILFTFLIVFLIASQIEA) form the signal peptide. Leu-36 carries the post-translational modification Leucine amide. Residues 40–64 (SEDREFFDFFTDDNLAALEKALKEY) constitute a propeptide that is removed on maturation.

It belongs to the non-disulfide-bridged peptide (NDBP) superfamily. Short antimicrobial peptide (group 4) family. In terms of tissue distribution, expressed by the venom gland.

The protein resides in the secreted. Functionally, antimicrobial peptide. The sequence is that of Peptide Ctri9677 from Chaerilus tricostatus (Scorpion).